The sequence spans 187 residues: Elongation factor P (187 aa).

The protein belongs to the elongation factor P family.

Its subcellular location is the cytoplasm. It participates in protein biosynthesis; polypeptide chain elongation. In terms of biological role, involved in peptide bond synthesis. Stimulates efficient translation and peptide-bond synthesis on native or reconstituted 70S ribosomes in vitro. Probably functions indirectly by altering the affinity of the ribosome for aminoacyl-tRNA, thus increasing their reactivity as acceptors for peptidyl transferase. This chain is Elongation factor P, found in Rhodococcus opacus (strain B4).